The primary structure comprises 405 residues: Terpene cyclase pbrA (405 aa).

Residues Asp103, Glu168, Asn229, Ser233, Glu237, and Asp241 each coordinate Mg(2+). Positions 103–108 (DDEISS) match the D(D/E)XX(D/E) motif motif. The short motif at 227-237 (LVNDLFSFYKE) is the NSE motif element. Positions 316–323 (EDLGGSSA) match the WxxxxxRY motif motif.

It belongs to the trichodiene synthase family. The cofactor is Mg(2+).

It functions in the pathway secondary metabolite biosynthesis; terpenoid biosynthesis. Terpene cyclase; part of the gene cluster that mediates the biosynthesis of the sesquiterpenoid aspterric acid (AA), an inhibitor of dihydroxy-acid dehydratase (DHAD) effective as an herbicide. PbrA cyclizes farnesyl diphosphate (FPP) to produce (-)-daucane. The cytochrome P450 monooxygenase pbrBB then converts (-)-daucane into the alpha-epoxy carboxylate intermediate which is further converted into the tricyclic aspterric acid by the cytochrome P450 monooxygenase pbrC. The polypeptide is Terpene cyclase pbrA (Penicillium brasilianum).